The sequence spans 390 residues: Homoserine O-succinyltransferase (390 aa).

In terms of domain architecture, AB hydrolase-1 spans 56 to 365; sequence NAVLICHALS…SPHGHDAFLL (310 aa). S162 acts as the Nucleophile in catalysis. R232 provides a ligand contact to substrate. Residues D327 and H360 contribute to the active site. Residue D361 participates in substrate binding.

It belongs to the AB hydrolase superfamily. MetX family. Homodimer.

Its subcellular location is the cytoplasm. The enzyme catalyses L-homoserine + succinyl-CoA = O-succinyl-L-homoserine + CoA. The protein operates within amino-acid biosynthesis; L-methionine biosynthesis via de novo pathway; O-succinyl-L-homoserine from L-homoserine: step 1/1. Functionally, transfers a succinyl group from succinyl-CoA to L-homoserine, forming succinyl-L-homoserine. In vitro, also has serine succinyl transferase activity. This chain is Homoserine O-succinyltransferase, found in Litchfieldella anticariensis (strain DSM 16096 / CECT 5854 / CIP 108499 / LMG 22089 / FP35) (Halomonas anticariensis).